The primary structure comprises 132 residues: Flagellar basal body rod protein FlgB (132 aa).

This sequence belongs to the flagella basal body rod proteins family. The basal body constitutes a major portion of the flagellar organelle and consists of a number of rings mounted on a central rod. In Gram-negative bacteria, at least four rings, L, P, S and M are present, whereas Gram-positive bacteria lack the L and P rings. The rod consists of about 26 subunits of FlgG in the distal portion, and FlgB, FlgC and FlgF build up the proximal portion of the rod with about 6 subunits each. Rod assembly occurs by export via the flagellum-specific pathway of its constituent proteins and by their incorporation into the rod structure in the probable order of FlgB, FlgC, FlgF and FlgG. Another protein, FliE, also assembles onto the stable rod structure.

The protein localises to the bacterial flagellum basal body. Structural component of flagellum, the bacterial motility apparatus. Part of the rod structure of flagellar basal body. The sequence is that of Flagellar basal body rod protein FlgB from Aeromonas hydrophila.